Consider the following 1124-residue polypeptide: MSSYFWAQNESNRPDLLCGQPADYLVEEKHFTTLVCFIVVLGGLLKMCLKNCEVIVLTILSLSGFVIGHMAYNSVEVHQIVYPLLRTSSFSLYSYFSPLIIFMVALDVEFYTLKKMFWQVLLTGLISFSTASIIIGYVVIKFNKDSWDLQSCLLFSITLGIIDPLRSVNSLKTIGISKIYIDLIRGESLIICSIASIFFGNFRGNRIHFSIFRDLHVGIELSYDILGSIIFGYWCAKIIQCILADVFSNMLTNIILCFSMVYMTFYIVEFLGMSGTLALAAVGLNLDSLTFKPKIELVITKFLRIFSSVYEHLIYAFFGIVIGCGELSHYEFHTIPFIFILFTTVNLVRLLTILLVSPILMHSNYEYNWRWGVVITWSGIKGVFNLLWAPDVYNLAERKVEVPQMFILYVQVISLLTMGINSYVMTQSARKLDLCVLSLPRQMILQNATQHIQEIVQNTITLFKTEKILTNVNWTLVEDKTRIEYIPFSHVSHNDMKTESTTDEALMEEARLHVAAIQMSSFEKQRNNGILEIEAARILIGAAKCYYSIQGKFMSIYDVSTYMRTRSWLIKFKNVLTFLEYCIEKIHFIPPESNTFLTFIFHIVFSEEFEYTGQIINLIYIYPMIIHLWPMARGLNVSALISINYYFMFLYVLESTLKIIILKRKYFQQCWNTLEFFILVIGIIDIFCVYFVKLRPDNLALIQLTVIMGYLRIIRFLPLFKIIVPILIRIADVQIKKRLSLMYSITKGYIKSQEDAKLLIKQIAVCESIYQKLCEILETNKQDAVKELVLMEHEGRDVVIALKTKQAIRNVIAKALKNLTFLCSRGIIDKHEVIEINKVLLKKLKALNNFPKAIPPPTPDIYLHNIIWLEGKDVLIDFFKERAKLACFDSGDTICKGGEMPQGIYLIISGMAILHSLSPTFGIESNQRCDRGSRDMFTEFCTTGDIIGELSCLLKREIEYTVICETSLQACFISLEDLYEGFDAFWPSLEYKIWLKLALSTAYQYFESSLIDEDLRFQNCVMFNQAYVETLSSYSDMIIDNMTMKFVIIVYGSVIDTKTEEPYFAPCIIPTTCEQVQGTSDLSKLLIIQASELTQRNSNTNVMASVNTVFEQPGKNINGRQKMS.

The next 11 helical transmembrane spans lie at 25–45 (LVEE…GGLL), 52–72 (CEVI…HMAY), 90–110 (FSLY…DVEF), 120–140 (VLLT…YVVI), 179–199 (IYID…SIFF), 224–244 (DILG…CILA), 254–274 (IILC…LGMS), 305–325 (IFSS…IGCG), 335–355 (IPFI…TILL), 372–392 (GVVI…APDV), and 405–425 (MFIL…SYVM). Residues Asn447 and Asn473 are each glycosylated (N-linked (GlcNAc...) asparagine). 4 helical membrane passes run 612–632 (TGQI…WPMA), 641–661 (ISIN…KIII), 674–694 (LEFF…FVKL), and 706–726 (VIMG…IVPI). The tract at residues 642–723 (SINYYFMFLY…IRFLPLFKII (82 aa)) is ion transport-like. Position 867–999 (867–999 (IWLEGKDVLI…EYKIWLKLAL (133 aa))) interacts with a nucleoside 3',5'-cyclic phosphate.

This sequence belongs to the monovalent cation:proton antiporter 1 (CPA1) transporter (TC 2.A.36) family.

It localises to the membrane. Functionally, involved in pH regulation. In Homo sapiens (Human), this protein is Sodium/hydrogen exchanger 11 (SLC9C2).